Reading from the N-terminus, the 503-residue chain is Galactose/methyl galactoside import ATP-binding protein MglA 2 (503 aa).

ABC transporter domains follow at residues Leu11–Glu246 and Thr257–Leu503. Gly43–Ser50 contacts ATP.

Belongs to the ABC transporter superfamily. Galactose/methyl galactoside importer (TC 3.A.1.2.3) family. The complex is composed of one ATP-binding protein (MglA), two transmembrane proteins (MglC) and a solute-binding protein (MglB).

The protein localises to the cell inner membrane. It catalyses the reaction D-galactose(out) + ATP + H2O = D-galactose(in) + ADP + phosphate + H(+). The enzyme catalyses methyl beta-D-galactoside(out) + ATP + H2O = methyl beta-D-galactoside(in) + ADP + phosphate + H(+). Functionally, part of the ABC transporter complex MglABC involved in galactose/methyl galactoside import. Responsible for energy coupling to the transport system. The sequence is that of Galactose/methyl galactoside import ATP-binding protein MglA 2 from Photobacterium profundum (strain SS9).